Consider the following 2863-residue polypeptide: Lipopolysaccharide-responsive and beige-like anchor protein (2863 aa).

3 disordered regions span residues 1–35, 969–1005, and 1018–1039; these read MASE…ALSL, VGSQ…ESAS, and EMKA…ETLT. Ala-2 carries the N-acetylalanine modification. Ser-10, Ser-979, and Ser-1003 each carry phosphoserine. The segment covering 985 to 1005 has biased composition (polar residues); the sequence is FTTNGNENSSIEKTSSLESAS. Residues 1006 to 1053 are a coiled coil; sequence NIELQTTNTSYEEMKAEQENQELPDEGTLEETLTNETRNADDLEVSSD. A compositionally biased stretch (acidic residues) spans 1024–1034; the sequence is ENQELPDEGTL. A phosphoserine mark is found at Ser-1100, Ser-1135, and Ser-1139. A compositionally biased stretch (basic and acidic residues) spans 1161–1176; it reads PVTEKQTDTETQDSKD. The disordered stretch occupies residues 1161–1193; that stretch reads PVTEKQTDTETQDSKDSGIQTMTASGSSAMSPE. The segment covering 1177-1193 has biased composition (polar residues); sequence SGIQTMTASGSSAMSPE. Residues Ser-1233, Ser-1247, and Ser-1261 each carry the phosphoserine modification. The stretch at 1301–1343 is one WD 1 repeat; the sequence is STVFRIPEFNWSQMHQRLLTDLLFSIETDIQMWRSHSTKTVMD. Ser-1488 and Ser-1498 each carry phosphoserine. Residues 1531–1548 form a helical membrane-spanning segment; that stretch reads FLALAVVYFISVLMVSKY. Over residues 1586–1599 the composition is skewed to low complexity; the sequence is LTTASVEESESTSS. Disordered stretches follow at residues 1586 to 1668 and 1759 to 1789; these read LTTA…KATP and QASD…VSQD. Position 1605 is a phosphoserine (Ser-1605). Residues 1650 to 1664 show a composition bias toward basic and acidic residues; it reads KSPETKNDRGNDLDT. Phosphoserine is present on residues Ser-1767, Ser-1770, and Ser-2064. A compositionally biased stretch (polar residues) spans 1769 to 1789; the sequence is GSRSSNAKLPSVPTVDSVSQD. Residues 2073 to 2181 enclose the BEACH-type PH domain; the sequence is NLAGPVSLST…TVKKVVNYLP (109 aa). In terms of domain architecture, BEACH spans 2200–2489; sequence ASPRQLFKAS…QLLIEPHPPR (290 aa). The residue at position 2496 (Ser-2496) is a Phosphoserine. WD repeat units lie at residues 2591-2633, 2636-2679, 2695-2735, 2777-2816, and 2819-2858; these read DQSI…LIQV, GHWD…SGIG, GHDY…RTLE, ETDD…QLFA, and GCDA…WHHE.

In terms of assembly, interacts with TOM1 and TOLLIP. Ubiquitous.

The protein localises to the cell membrane. It is found in the endoplasmic reticulum membrane. The protein resides in the golgi apparatus. It localises to the trans-Golgi network membrane. Its subcellular location is the lysosome membrane. Its function is as follows. Involved in coupling signal transduction and vesicle trafficking to enable polarized secretion and/or membrane deposition of immune effector molecules. Involved in phagophore growth during mitophagy by regulating ATG9A trafficking to mitochondria. The protein is Lipopolysaccharide-responsive and beige-like anchor protein of Homo sapiens (Human).